The primary structure comprises 167 residues: Regulator of sigma D (167 aa).

The protein belongs to the Rsd/AlgQ family. As to quaternary structure, interacts with RpoD.

It localises to the cytoplasm. In terms of biological role, binds RpoD and negatively regulates RpoD-mediated transcription activation by preventing the interaction between the primary sigma factor RpoD with the catalytic core of the RNA polymerase and with promoter DNA. May be involved in replacement of the RNA polymerase sigma subunit from RpoD to RpoS during the transition from exponential growth to the stationary phase. This is Regulator of sigma D from Yersinia enterocolitica serotype O:8 / biotype 1B (strain NCTC 13174 / 8081).